A 414-amino-acid chain; its full sequence is Serine hydroxymethyltransferase (414 aa).

(6S)-5,6,7,8-tetrahydrofolate contacts are provided by residues Leu-121 and 125 to 127 (GHL). Lys-229 carries the post-translational modification N6-(pyridoxal phosphate)lysine.

This sequence belongs to the SHMT family. In terms of assembly, homodimer. Requires pyridoxal 5'-phosphate as cofactor.

The protein localises to the cytoplasm. It carries out the reaction (6R)-5,10-methylene-5,6,7,8-tetrahydrofolate + glycine + H2O = (6S)-5,6,7,8-tetrahydrofolate + L-serine. It participates in one-carbon metabolism; tetrahydrofolate interconversion. It functions in the pathway amino-acid biosynthesis; glycine biosynthesis; glycine from L-serine: step 1/1. In terms of biological role, catalyzes the reversible interconversion of serine and glycine with tetrahydrofolate (THF) serving as the one-carbon carrier. This reaction serves as the major source of one-carbon groups required for the biosynthesis of purines, thymidylate, methionine, and other important biomolecules. Also exhibits THF-independent aldolase activity toward beta-hydroxyamino acids, producing glycine and aldehydes, via a retro-aldol mechanism. This is Serine hydroxymethyltransferase from Herminiimonas arsenicoxydans.